Here is a 950-residue protein sequence, read N- to C-terminus: Calcium-transporting ATPase 1 (950 aa).

N-acetylserine is present on Ser2. Over Ser2–Phe92 the chain is Cytoplasmic. Residues Ile93–Met111 traverse the membrane as a helical segment. Residues Gly112–Asp116 lie on the Lumenal side of the membrane. A helical transmembrane segment spans residues Ala117–Val133. The Cytoplasmic segment spans residues Gln134–Lys288. Residue Ser227 is modified to Phosphoserine. The helical transmembrane segment at Asp289–Gly309 threads the bilayer. Residues Arg310–Ala323 are Lumenal-facing. Residues Val324–Leu344 form a helical membrane-spanning segment. Over Arg345 to Arg814 the chain is Cytoplasmic. The 4-aspartylphosphate intermediate role is filled by Asp371. The chain crosses the membrane as a helical span at residues Leu815–Ala835. Residues Glu836 to Asp844 lie on the Lumenal side of the membrane. Residues Thr845–Ala862 form a helical membrane-spanning segment. Residues Cys863 to Ala884 are Cytoplasmic-facing. The helical transmembrane segment at Val885–Phe905 threads the bilayer. Over Lys906–Lys909 the chain is Lumenal. The helical transmembrane segment at Leu910–Glu930 threads the bilayer. The Cytoplasmic portion of the chain corresponds to Leu931 to Val950.

This sequence belongs to the cation transport ATPase (P-type) (TC 3.A.3) family.

It localises to the golgi apparatus membrane. The enzyme catalyses Ca(2+)(in) + ATP + H2O = Ca(2+)(out) + ADP + phosphate + H(+). Its function is as follows. This magnesium-dependent enzyme catalyzes the hydrolysis of ATP coupled with the transport of calcium. Has a role in the secretory pathway. The polypeptide is Calcium-transporting ATPase 1 (PMR1) (Saccharomyces cerevisiae (strain ATCC 204508 / S288c) (Baker's yeast)).